Here is a 268-residue protein sequence, read N- to C-terminus: Ribonuclease P protein subunit p30 (268 aa).

Ala-2 carries the post-translational modification N-acetylalanine. Ser-251 carries the post-translational modification Phosphoserine.

It belongs to the eukaryotic/archaeal RNase P protein component 3 family. As to quaternary structure, component of nuclear RNase P and RNase MRP ribonucleoproteins. RNase P consists of a catalytic RNA moiety and about 10 protein subunits; POP1, POP4, POP5, POP7, RPP14, RPP21, RPP25, RPP30, RPP38 and RPP40. Within the RNase P complex, POP1, POP7 and RPP25 form the 'finger' subcomplex, POP5, RPP14, RPP40 and homodimeric RPP30 form the 'palm' subcomplex, and RPP21, POP4 and RPP38 form the 'wrist' subcomplex. All subunits of the RNase P complex interact with the catalytic RNA. Several subunits of RNase P are also part of the RNase MRP complex. RNase MRP consists of a catalytic RNA moiety and about 8 protein subunits; POP1, POP7, RPP25, RPP30, RPP38, RPP40 and possibly also POP4 and POP5.

It is found in the nucleus. Its subcellular location is the nucleolus. Component of ribonuclease P, a ribonucleoprotein complex that generates mature tRNA molecules by cleaving their 5'-ends. Also a component of the MRP ribonuclease complex, which cleaves pre-rRNA sequences. This is Ribonuclease P protein subunit p30 (RPP30) from Bos taurus (Bovine).